A 195-amino-acid chain; its full sequence is Probable GTP-binding protein EngB (195 aa).

The EngB-type G domain maps to 24-195 (DWPEIALAGR…EAWTAILKYL (172 aa)). GTP is bound by residues 32–39 (GRSNVGKS), 59–63 (GKTQL), 77–80 (DVPG), 144–147 (TKAD), and 176–178 (FSS). Ser39 and Thr61 together coordinate Mg(2+).

The protein belongs to the TRAFAC class TrmE-Era-EngA-EngB-Septin-like GTPase superfamily. EngB GTPase family. Mg(2+) serves as cofactor.

Functionally, necessary for normal cell division and for the maintenance of normal septation. The chain is Probable GTP-binding protein EngB from Lactococcus lactis subsp. cremoris (strain MG1363).